The primary structure comprises 244 residues: Phosphoadenosine 5'-phosphosulfate reductase (244 aa).

Cys-239 (nucleophile; cysteine thiosulfonate intermediate) is an active-site residue.

The protein belongs to the PAPS reductase family. CysH subfamily.

It is found in the cytoplasm. The catalysed reaction is [thioredoxin]-disulfide + sulfite + adenosine 3',5'-bisphosphate + 2 H(+) = [thioredoxin]-dithiol + 3'-phosphoadenylyl sulfate. It functions in the pathway sulfur metabolism; hydrogen sulfide biosynthesis; sulfite from sulfate: step 3/3. Functionally, catalyzes the formation of sulfite from phosphoadenosine 5'-phosphosulfate (PAPS) using thioredoxin as an electron donor. This is Phosphoadenosine 5'-phosphosulfate reductase from Salmonella typhi.